Here is a 142-residue protein sequence, read N- to C-terminus: Hemoglobin subunit alpha (142 aa).

Residues 2–142 form the Globin domain; that stretch reads VLSAADKNNV…VSTVLTSKYR (141 aa). A Phosphoserine modification is found at S4. Residues K8 and K12 each carry the N6-succinyllysine modification. N6-acetyllysine; alternate is present on K17. K17 carries the post-translational modification N6-succinyllysine; alternate. Phosphotyrosine is present on Y25. A Phosphoserine modification is found at S36. K41 carries the post-translational modification N6-succinyllysine. S50 carries the phosphoserine modification. H59 contacts O2. Heme b is bound at residue H88. T109 is subject to Phosphothreonine. Phosphoserine is present on residues S125 and S132. Residues T135 and T138 each carry the phosphothreonine modification. Residue S139 is modified to Phosphoserine.

Belongs to the globin family. As to quaternary structure, heterotetramer of two alpha chains and two beta chains. As to expression, red blood cells.

Its function is as follows. Involved in oxygen transport from the lung to the various peripheral tissues. In terms of biological role, hemopressin acts as an antagonist peptide of the cannabinoid receptor CNR1. Hemopressin-binding efficiently blocks cannabinoid receptor CNR1 and subsequent signaling. The sequence is that of Hemoglobin subunit alpha (HBA) from Cavia porcellus (Guinea pig).